A 344-amino-acid polypeptide reads, in one-letter code: Neurotrimin (344 aa).

An N-terminal signal peptide occupies residues 1 to 33 (MGVCGYLFLPWKCLVVVSLRLLFLVPTGVPVRS). 3 consecutive Ig-like C2-type domains span residues 39-126 (PKAM…PKTS), 136-218 (PKIV…VKVT), and 222-309 (PPYI…ASIM). N-linked (GlcNAc...) asparagine glycosylation is found at Asn-44, Asn-70, and Asn-152. Cys-57 and Cys-115 form a disulfide bridge. 2 cysteine pairs are disulfide-bonded: Cys-157-Cys-201 and Cys-243-Cys-295. N-linked (GlcNAc...) asparagine glycans are attached at residues Asn-284, Asn-292, and Asn-305. The GPI-anchor amidated asparagine; alternate moiety is linked to residue Asn-321. The N-linked (GlcNAc...) asparagine; alternate glycan is linked to Asn-321. Positions 322 to 344 (GTSRRAGCIWLLPLLVLHLLLKF) are cleaved as a propeptide — removed in mature form.

Belongs to the immunoglobulin superfamily. IgLON family.

It is found in the cell membrane. In terms of biological role, neural cell adhesion molecule. This is Neurotrimin (Ntm) from Mus musculus (Mouse).